Reading from the N-terminus, the 132-residue chain is Small ribosomal subunit protein uS8 (132 aa).

Belongs to the universal ribosomal protein uS8 family. Part of the 30S ribosomal subunit. Contacts proteins S5 and S12.

One of the primary rRNA binding proteins, it binds directly to 16S rRNA central domain where it helps coordinate assembly of the platform of the 30S subunit. In Leuconostoc mesenteroides subsp. mesenteroides (strain ATCC 8293 / DSM 20343 / BCRC 11652 / CCM 1803 / JCM 6124 / NCDO 523 / NBRC 100496 / NCIMB 8023 / NCTC 12954 / NRRL B-1118 / 37Y), this protein is Small ribosomal subunit protein uS8.